The following is a 122-amino-acid chain: Zein-alpha B49 (122 aa).

The protein belongs to the zein family.

Zeins are major seed storage proteins. The protein is Zein-alpha B49 of Zea mays (Maize).